Consider the following 326-residue polypeptide: Homocysteine S-methyltransferase 1 (326 aa).

The Hcy-binding domain maps to 9–323 (LLEDLIKKCG…STINAISRDL (315 aa)). Residues Cys241, Cys308, and Cys309 each contribute to the Zn(2+) site.

In terms of assembly, monomer. Zn(2+) serves as cofactor. In terms of tissue distribution, expressed predominantly in roots. Expressed in rosette leaves, cauline leaves and developing seeds.

It catalyses the reaction S-methyl-L-methionine + L-homocysteine = 2 L-methionine + H(+). Strongly inhibited by methionine. In terms of biological role, catalyzes methyl transfer from S-methylmethionine (SMM) to adenosyl-L-homocysteine (AdoMet). SMM degradation (by HMT-1, HMT-2 and HMT-3) and biosynthesis (by MMT1) constitute the SMM cycle in plants, which is probably required to achieve short term control of AdoMet level. The polypeptide is Homocysteine S-methyltransferase 1 (HMT-1) (Arabidopsis thaliana (Mouse-ear cress)).